Consider the following 421-residue polypeptide: Gamma-glutamyl phosphate reductase (421 aa).

Belongs to the gamma-glutamyl phosphate reductase family.

It localises to the cytoplasm. The catalysed reaction is L-glutamate 5-semialdehyde + phosphate + NADP(+) = L-glutamyl 5-phosphate + NADPH + H(+). It participates in amino-acid biosynthesis; L-proline biosynthesis; L-glutamate 5-semialdehyde from L-glutamate: step 2/2. Its function is as follows. Catalyzes the NADPH-dependent reduction of L-glutamate 5-phosphate into L-glutamate 5-semialdehyde and phosphate. The product spontaneously undergoes cyclization to form 1-pyrroline-5-carboxylate. This is Gamma-glutamyl phosphate reductase from Pseudomonas aeruginosa (strain LESB58).